A 155-amino-acid chain; its full sequence is Large ribosomal subunit protein eL24 (155 aa).

The segment covering 97 to 129 has biased composition (basic and acidic residues); the sequence is KPEIRKAKRDEKAKADKEKKKADKAARKADKAK. The disordered stretch occupies residues 97–155; it reads KPEIRKAKRDEKAKADKEKKKADKAARKADKAKSAATQASKISKQQAKGAFQKVAATSR. Positions 133-142 are enriched in polar residues; the sequence is TQASKISKQQ.

The protein belongs to the eukaryotic ribosomal protein eL24 family.

The protein is Large ribosomal subunit protein eL24 (RPL24) of Eremothecium gossypii (strain ATCC 10895 / CBS 109.51 / FGSC 9923 / NRRL Y-1056) (Yeast).